The following is a 285-amino-acid chain: Heme oxygenase 3, chloroplastic (285 aa).

A chloroplast-targeting transit peptide spans 1–58 (MATTRLNPSCHFPASTRLSCESYLGLRTTGRISYARTLTAPRGYLAVKANGGQASVVT). Residue His89 participates in heme b binding. Residues 89–105 (HTKDQAREGEKESRSPE) show a composition bias toward basic and acidic residues. The segment at 89 to 109 (HTKDQAREGEKESRSPEEGPV) is disordered.

This sequence belongs to the heme oxygenase family. In terms of tissue distribution, widely expressed at low levels.

Its subcellular location is the plastid. It localises to the chloroplast. The enzyme catalyses heme b + 3 reduced [NADPH--hemoprotein reductase] + 3 O2 = biliverdin IXalpha + CO + Fe(2+) + 3 oxidized [NADPH--hemoprotein reductase] + 3 H2O + H(+). Functionally, catalyzes the opening of the heme ring to form the open-chain tetrapyrrole biliverdin IX with the release of iron and carbon monoxide (CO). Produces specifically the biliverdin IX-alpha isomer. Plays a minor role in phytochrome assembly and photomorphogenesis. This Arabidopsis thaliana (Mouse-ear cress) protein is Heme oxygenase 3, chloroplastic (HO3).